We begin with the raw amino-acid sequence, 230 residues long: 5'-methylthioadenosine/S-adenosylhomocysteine nucleosidase (230 aa).

Glu12 serves as the catalytic Proton acceptor. Substrate is bound by residues Gly78, Ile153, and 174–175; that span reads ME. The active-site Proton donor is Asp198.

It belongs to the PNP/UDP phosphorylase family. MtnN subfamily.

It carries out the reaction S-adenosyl-L-homocysteine + H2O = S-(5-deoxy-D-ribos-5-yl)-L-homocysteine + adenine. The catalysed reaction is S-methyl-5'-thioadenosine + H2O = 5-(methylsulfanyl)-D-ribose + adenine. The enzyme catalyses 5'-deoxyadenosine + H2O = 5-deoxy-D-ribose + adenine. It functions in the pathway amino-acid biosynthesis; L-methionine biosynthesis via salvage pathway; S-methyl-5-thio-alpha-D-ribose 1-phosphate from S-methyl-5'-thioadenosine (hydrolase route): step 1/2. Catalyzes the irreversible cleavage of the glycosidic bond in both 5'-methylthioadenosine (MTA) and S-adenosylhomocysteine (SAH/AdoHcy) to adenine and the corresponding thioribose, 5'-methylthioribose and S-ribosylhomocysteine, respectively. Also cleaves 5'-deoxyadenosine, a toxic by-product of radical S-adenosylmethionine (SAM) enzymes, into 5-deoxyribose and adenine. This Shewanella loihica (strain ATCC BAA-1088 / PV-4) protein is 5'-methylthioadenosine/S-adenosylhomocysteine nucleosidase.